The primary structure comprises 148 residues: Large ribosomal subunit protein bL9 (148 aa).

The protein belongs to the bacterial ribosomal protein bL9 family.

Functionally, binds to the 23S rRNA. This chain is Large ribosomal subunit protein bL9, found in Caldicellulosiruptor bescii (strain ATCC BAA-1888 / DSM 6725 / KCTC 15123 / Z-1320) (Anaerocellum thermophilum).